The chain runs to 202 residues: Prephenate decarboxylase (202 aa).

It belongs to the prephenate decarboxylase family.

The catalysed reaction is prephenate + H(+) = 3-[(4R)-4-hydroxycyclohexa-1,5-dien-1-yl]-2-oxopropanoate + CO2. Its function is as follows. In vivo, involved in the biosynthesis of 2-carboxy-6-hydroxyoctahydroindole (Choi) present in the nonribosomal glycopeptides aeruginoside 126A and B. AerD is an unusual prephenate decarboxylase that avoids the typical aromatization of the cyclohexadienol ring of prephenate. AerD catalyzes the protonation at C8 followed by decarboxylation to produce the dihydro-4-hydroxyphenylpyruvate regioisomer A258 (H2HPP A258)(3-(4-hydroxycyclohexa- 1,5-dienyl)-2-oxopropanoic acid), which is able to undergo a nonenzymatic isomerization to produce dihydro-4-hydroxyphenylpyruvate regioisomer A295 (H2HPP A295)(3-(4-hydroxycyclohex-2-enylidene)-2-oxopropanoic acid). The sequence is that of Prephenate decarboxylase from Planktothrix agardhii (strain NIVA-CYA 126/8).